The primary structure comprises 462 residues: MDTTLSKASPVEYELDLHATADELEPKLKEALNAQRKNMDVQGFRKGKVPLGLVKKMHGEAIGYRVAEQFVQEAFEEEVEETDAIEPLGQPTLVDLDYELDADLQATLRFGVRPGVELEDLSSVEITMLDPEITEEDVEDEIERLRKEEADLLPLEEEAAEDTDYVNIDLQRIDPDTDTPIIGDKDEDLTFFLDDDRLKEELREALVGQKAGDTFRVELPQEHPAHEHAGHGHPHEHEGDGEDRLYEVTVNDVKRRDLPPLDEEFVRRVTEGELDDLEAFRNDIRERLQEAWNERAREMAQGEVIDKMLELHPVPVPESVIEGYLDSFVKQVEEENDGELPEDFDEEHFRQRNRRDAEDQGRWMLIRDQIVEEQDLEVSNEEIQTFFAEQSGGEEQVTAQQIEQFYQTMPQMMEKVEQQILSDKVYDFLFDRLDVESKSREEFEEEMQQQQQQQAQRQRMAP.

One can recognise a PPIase FKBP-type domain in the interval 163–259; the sequence is TDYVNIDLQR…VNDVKRRDLP (97 aa). The disordered stretch occupies residues 439 to 462; sequence SREEFEEEMQQQQQQQAQRQRMAP. Residues 448–462 are compositionally biased toward low complexity; that stretch reads QQQQQQQAQRQRMAP.

Belongs to the FKBP-type PPIase family. Tig subfamily.

Its subcellular location is the cytoplasm. It carries out the reaction [protein]-peptidylproline (omega=180) = [protein]-peptidylproline (omega=0). Involved in protein export. Acts as a chaperone by maintaining the newly synthesized protein in an open conformation. Functions as a peptidyl-prolyl cis-trans isomerase. The polypeptide is Trigger factor (Salinibacter ruber (strain DSM 13855 / M31)).